The sequence spans 196 residues: Nucleoid occlusion factor SlmA (196 aa).

The region spanning 7-68 (TNRREEILQA…GLIEFIEDSI (62 aa)) is the HTH tetR-type domain. Residues 31–50 (TTAKLAAQVGVSEAALYRHF) constitute a DNA-binding region (H-T-H motif). Positions 115 to 142 (EQDRLQSRINQLFERIETQLRQVLRERK) form a coiled coil.

Belongs to the nucleoid occlusion factor SlmA family. In terms of assembly, homodimer. Interacts with FtsZ.

The protein resides in the cytoplasm. It is found in the nucleoid. Required for nucleoid occlusion (NO) phenomenon, which prevents Z-ring formation and cell division over the nucleoid. Acts as a DNA-associated cell division inhibitor that binds simultaneously chromosomal DNA and FtsZ, and disrupts the assembly of FtsZ polymers. SlmA-DNA-binding sequences (SBS) are dispersed on non-Ter regions of the chromosome, preventing FtsZ polymerization at these regions. This Photobacterium profundum (strain SS9) protein is Nucleoid occlusion factor SlmA.